A 642-amino-acid chain; its full sequence is Threonine--tRNA ligase (642 aa).

The TGS domain maps to 1–65 (MSDIITVTLP…DEDVKLQIFT (65 aa)). Positions 248-541 (DHRKLGKELD…LIEHFAGAFP (294 aa)) are catalytic. Zn(2+)-binding residues include cysteine 342, histidine 393, and histidine 518.

This sequence belongs to the class-II aminoacyl-tRNA synthetase family. Homodimer. Zn(2+) serves as cofactor.

It localises to the cytoplasm. It carries out the reaction tRNA(Thr) + L-threonine + ATP = L-threonyl-tRNA(Thr) + AMP + diphosphate + H(+). Catalyzes the attachment of threonine to tRNA(Thr) in a two-step reaction: L-threonine is first activated by ATP to form Thr-AMP and then transferred to the acceptor end of tRNA(Thr). Also edits incorrectly charged L-seryl-tRNA(Thr). This Myxococcus xanthus (strain DK1622) protein is Threonine--tRNA ligase.